The following is a 340-amino-acid chain: HPr kinase/phosphorylase (340 aa).

Catalysis depends on residues histidine 153 and lysine 174. 168–175 (GNSGLGKS) lines the ATP pocket. Serine 175 provides a ligand contact to Mg(2+). The Proton acceptor; for phosphorylation activity. Proton donor; for dephosphorylation activity role is filled by aspartate 192. The interval 216–225 (MEIRGLGVVD) is important for the catalytic mechanism of both phosphorylation and dephosphorylation. A Mg(2+)-binding site is contributed by glutamate 217. Arginine 258 is an active-site residue. The interval 279–284 (PINPGK) is important for the catalytic mechanism of dephosphorylation.

Belongs to the HPrK/P family. In terms of assembly, homohexamer. Mg(2+) serves as cofactor.

It carries out the reaction [HPr protein]-L-serine + ATP = [HPr protein]-O-phospho-L-serine + ADP + H(+). It catalyses the reaction [HPr protein]-O-phospho-L-serine + phosphate + H(+) = [HPr protein]-L-serine + diphosphate. In terms of biological role, catalyzes the ATP- as well as the pyrophosphate-dependent phosphorylation of a specific serine residue in HPr, a phosphocarrier protein of the phosphoenolpyruvate-dependent sugar phosphotransferase system (PTS). HprK/P also catalyzes the pyrophosphate-producing, inorganic phosphate-dependent dephosphorylation (phosphorolysis) of seryl-phosphorylated HPr (P-Ser-HPr). This chain is HPr kinase/phosphorylase, found in Prosthecochloris aestuarii (strain DSM 271 / SK 413).